Consider the following 819-residue polypeptide: Advillin (819 aa).

A core region spans residues 1 to 731 (MSLSSAFRTV…YEQLKNELGD (731 aa)). The Gelsolin-like 1 repeat unit spans residues 24–105 (MELVLVPLSA…VQYHESDTFR (82 aa)). Y85 carries the post-translational modification Phosphotyrosine. Residues 109-116 (KRGIIYKK) and 135-143 (RLLHVKGKR) contribute to the a 1,2-diacyl-sn-glycero-3-phospho-(1D-myo-inositol-4,5-bisphosphate) site. Gelsolin-like repeat units follow at residues 144-215 (NIRA…KEAA), 265-339 (TEVA…SAMF), 407-486 (LVPV…RHFM), 524-592 (NTKA…PEFW), and 631-704 (TEVT…PPTF). The segment at 628–819 (FLVTEVTDFT…LQLKKEAGLF (192 aa)) is required for interaction with F-actin. The segment at 731–819 (DATAIVRITT…LQLKKEAGLF (89 aa)) is headpiece. An HP domain is found at 753-819 (ESGPKYYPVE…LQLKKEAGLF (67 aa)). Y758 carries the post-translational modification Phosphotyrosine.

Belongs to the villin/gelsolin family. In terms of assembly, associates (via C-terminus) with actin. Interacts with F-actin. Interacts with SCARF1; the interaction occurs in embryonic dorsal root ganglions at 18 dpc and induces neurite-like outgrowth. Interacts with PLCE1. Interacts with ACTR2 and ACTR3; associates with the ARP2/3 complex. In terms of tissue distribution, expressed in dorsal root ganglion (DRG) neurons and superior cervical ganglia (SCG). Expressed in podocytes.

The protein resides in the cytoplasm. It is found in the cytoskeleton. Its subcellular location is the cell projection. It localises to the neuron projection. The protein localises to the axon. The protein resides in the lamellipodium. It is found in the cell junction. Its subcellular location is the focal adhesion. Ca(2+)-regulated actin-binding protein which plays an important role in actin bundling. May have a unique function in the morphogenesis of neuronal cells which form ganglia. Required for SREC1-mediated regulation of neurite-like outgrowth. Plays a role in regenerative sensory axon outgrowth and remodeling processes after peripheral injury in neonates. Involved in the formation of long fine actin-containing filopodia-like structures in fibroblast. Plays a role in ciliogenesis. In podocytes, controls lamellipodia formation through the regulation of EGF-induced diacylglycerol generation by PLCE1 and ARP2/3 complex assembly. This Rattus norvegicus (Rat) protein is Advillin.